A 404-amino-acid chain; its full sequence is uncharacterized protein (404 aa).

This is an uncharacterized protein from Alcelaphine herpesvirus 1 (strain C500) (AlHV-1).